The primary structure comprises 188 residues: MIIIMDNGGQYVHRIWRTLRYLGVEAKIIPNTTPLDEIKAMKPKGIIFSGGPSLENTGNCEKILEHYEEFNVPILGICLGHQLIAKFFGGEVGRGEKAEYSLVEIEIIDENDIFKGLPRKVRVWESHMDEVKKLPPKFKLLARSDTCPVEAMKHEELPIYGVQFHPEVAHTEHGADILRNFAKICGEL.

The Glutamine amidotransferase type-1 domain maps to 1-188 (MIIIMDNGGQ…RNFAKICGEL (188 aa)). Catalysis depends on Cys-78, which acts as the Nucleophile. Catalysis depends on residues His-165 and Glu-167.

Heterodimer composed of a glutamine amidotransferase subunit (A) and a GMP-binding subunit (B).

The enzyme catalyses XMP + L-glutamine + ATP + H2O = GMP + L-glutamate + AMP + diphosphate + 2 H(+). It functions in the pathway purine metabolism; GMP biosynthesis; GMP from XMP (L-Gln route): step 1/1. Its function is as follows. Catalyzes the synthesis of GMP from XMP. The protein is GMP synthase [glutamine-hydrolyzing] subunit A of Pyrococcus furiosus (strain ATCC 43587 / DSM 3638 / JCM 8422 / Vc1).